Consider the following 328-residue polypeptide: Phosphate acyltransferase (328 aa).

Belongs to the PlsX family. Homodimer. Probably interacts with PlsY.

Its subcellular location is the cytoplasm. It catalyses the reaction a fatty acyl-[ACP] + phosphate = an acyl phosphate + holo-[ACP]. The protein operates within lipid metabolism; phospholipid metabolism. Functionally, catalyzes the reversible formation of acyl-phosphate (acyl-PO(4)) from acyl-[acyl-carrier-protein] (acyl-ACP). This enzyme utilizes acyl-ACP as fatty acyl donor, but not acyl-CoA. The chain is Phosphate acyltransferase from Campylobacter jejuni subsp. doylei (strain ATCC BAA-1458 / RM4099 / 269.97).